Consider the following 142-residue polypeptide: Large ribosomal subunit protein uL11 (142 aa).

It belongs to the universal ribosomal protein uL11 family. Part of the ribosomal stalk of the 50S ribosomal subunit. Interacts with L10 and the large rRNA to form the base of the stalk. L10 forms an elongated spine to which L12 dimers bind in a sequential fashion forming a multimeric L10(L12)X complex. One or more lysine residues are methylated.

Its function is as follows. Forms part of the ribosomal stalk which helps the ribosome interact with GTP-bound translation factors. In Mycobacteroides abscessus (strain ATCC 19977 / DSM 44196 / CCUG 20993 / CIP 104536 / JCM 13569 / NCTC 13031 / TMC 1543 / L948) (Mycobacterium abscessus), this protein is Large ribosomal subunit protein uL11.